The chain runs to 277 residues: Phosphatidylserine decarboxylase proenzyme (277 aa).

Residues D88, H144, and S242 each act as charge relay system; for autoendoproteolytic cleavage activity in the active site. The Schiff-base intermediate with substrate; via pyruvic acid; for decarboxylase activity role is filled by S242. Position 242 is a pyruvic acid (Ser); by autocatalysis (S242).

It belongs to the phosphatidylserine decarboxylase family. PSD-B subfamily. Prokaryotic type I sub-subfamily. In terms of assembly, heterodimer of a large membrane-associated beta subunit and a small pyruvoyl-containing alpha subunit. The cofactor is pyruvate. Is synthesized initially as an inactive proenzyme. Formation of the active enzyme involves a self-maturation process in which the active site pyruvoyl group is generated from an internal serine residue via an autocatalytic post-translational modification. Two non-identical subunits are generated from the proenzyme in this reaction, and the pyruvate is formed at the N-terminus of the alpha chain, which is derived from the carboxyl end of the proenzyme. The autoendoproteolytic cleavage occurs by a canonical serine protease mechanism, in which the side chain hydroxyl group of the serine supplies its oxygen atom to form the C-terminus of the beta chain, while the remainder of the serine residue undergoes an oxidative deamination to produce ammonia and the pyruvoyl prosthetic group on the alpha chain. During this reaction, the Ser that is part of the protease active site of the proenzyme becomes the pyruvoyl prosthetic group, which constitutes an essential element of the active site of the mature decarboxylase.

Its subcellular location is the cell membrane. It carries out the reaction a 1,2-diacyl-sn-glycero-3-phospho-L-serine + H(+) = a 1,2-diacyl-sn-glycero-3-phosphoethanolamine + CO2. It functions in the pathway phospholipid metabolism; phosphatidylethanolamine biosynthesis; phosphatidylethanolamine from CDP-diacylglycerol: step 2/2. In terms of biological role, catalyzes the formation of phosphatidylethanolamine (PtdEtn) from phosphatidylserine (PtdSer). This Psychrobacter cryohalolentis (strain ATCC BAA-1226 / DSM 17306 / VKM B-2378 / K5) protein is Phosphatidylserine decarboxylase proenzyme.